A 313-amino-acid chain; its full sequence is MSLMNWFEDRRKFSGLIGAFIEKATKGYILSERRKDRHIKIDTTKGLWTRCDNCENMLYIRFLRQNKRICEECGYHLQMSSTERIESLIDRGTWHPMDEDMVARDALKFSDEDSYKNRVLFYQKRTGLTDAIQTGIGKLNGIPIALGVMDFQFMGGSMGSVVGEKITRLIEYGTRESMPVIIVCSSGGARMQEGTLSLMQMAKISAVLQIHQAQKKLLYIAILTYPTTGGVTASFGMLGDVIIAEPKAYIAFAGKRVIEQTLRQKIPDGSQVAESLFDHGLLDLIVPRNLLRGVLSEIFELYSSAPCRRSNNS.

One can recognise a CoA carboxyltransferase N-terminal domain in the interval 47-313 (LWTRCDNCEN…SAPCRRSNNS (267 aa)). Zn(2+)-binding residues include C51, C54, C70, and C73. The C4-type zinc finger occupies 51-73 (CDNCENMLYIRFLRQNKRICEEC).

Belongs to the AccD/PCCB family. In terms of assembly, acetyl-CoA carboxylase is a heterohexamer composed of biotin carboxyl carrier protein, biotin carboxylase and 2 subunits each of ACCase subunit alpha and ACCase plastid-coded subunit beta (accD). The cofactor is Zn(2+).

The protein resides in the plastid. The protein localises to the chloroplast stroma. It catalyses the reaction N(6)-carboxybiotinyl-L-lysyl-[protein] + acetyl-CoA = N(6)-biotinyl-L-lysyl-[protein] + malonyl-CoA. It participates in lipid metabolism; malonyl-CoA biosynthesis; malonyl-CoA from acetyl-CoA: step 1/1. Component of the acetyl coenzyme A carboxylase (ACC) complex. Biotin carboxylase (BC) catalyzes the carboxylation of biotin on its carrier protein (BCCP) and then the CO(2) group is transferred by the transcarboxylase to acetyl-CoA to form malonyl-CoA. This is Acetyl-coenzyme A carboxylase carboxyl transferase subunit beta, chloroplastic from Anthoceros angustus (Hornwort).